The chain runs to 342 residues: Aspartate carbamoyltransferase catalytic subunit (342 aa).

The carbamoyl phosphate site is built by R59 and T60. K87 provides a ligand contact to L-aspartate. Carbamoyl phosphate is bound by residues R109, H142, and Q145. The L-aspartate site is built by R182 and R253. Positions 294 and 295 each coordinate carbamoyl phosphate.

Belongs to the aspartate/ornithine carbamoyltransferase superfamily. ATCase family. As to quaternary structure, heterododecamer (2C3:3R2) of six catalytic PyrB chains organized as two trimers (C3), and six regulatory PyrI chains organized as three dimers (R2).

It carries out the reaction carbamoyl phosphate + L-aspartate = N-carbamoyl-L-aspartate + phosphate + H(+). It functions in the pathway pyrimidine metabolism; UMP biosynthesis via de novo pathway; (S)-dihydroorotate from bicarbonate: step 2/3. In terms of biological role, catalyzes the condensation of carbamoyl phosphate and aspartate to form carbamoyl aspartate and inorganic phosphate, the committed step in the de novo pyrimidine nucleotide biosynthesis pathway. The chain is Aspartate carbamoyltransferase catalytic subunit from Synechococcus sp. (strain WH7803).